A 395-amino-acid polypeptide reads, in one-letter code: 8-amino-7-oxononanoate synthase (395 aa).

Residue 108–109 (GF) participates in pyridoxal 5'-phosphate binding. Substrate is bound at residue histidine 134. Residues serine 184, 209–212 (DDAH), and 240–243 (TLSK) contribute to the pyridoxal 5'-phosphate site. The residue at position 243 (lysine 243) is an N6-(pyridoxal phosphate)lysine. Threonine 357 is a substrate binding site.

Belongs to the class-II pyridoxal-phosphate-dependent aminotransferase family. BioF subfamily. As to quaternary structure, homodimer. The cofactor is pyridoxal 5'-phosphate.

It carries out the reaction 6-carboxyhexanoyl-[ACP] + L-alanine + H(+) = (8S)-8-amino-7-oxononanoate + holo-[ACP] + CO2. It participates in cofactor biosynthesis; biotin biosynthesis. Its function is as follows. Catalyzes the decarboxylative condensation of pimeloyl-[acyl-carrier protein] and L-alanine to produce 8-amino-7-oxononanoate (AON), [acyl-carrier protein], and carbon dioxide. The sequence is that of 8-amino-7-oxononanoate synthase from Fervidobacterium nodosum (strain ATCC 35602 / DSM 5306 / Rt17-B1).